Consider the following 113-residue polypeptide: Large ribosomal subunit protein bL19 (113 aa).

This sequence belongs to the bacterial ribosomal protein bL19 family.

Its function is as follows. This protein is located at the 30S-50S ribosomal subunit interface and may play a role in the structure and function of the aminoacyl-tRNA binding site. This is Large ribosomal subunit protein bL19 from Corynebacterium urealyticum (strain ATCC 43042 / DSM 7109).